The chain runs to 493 residues: Aerolysin (493 aa).

Residues 1-23 (MQKIKLTGLSLIISGLLMAQAQA) form the signal peptide. 2 disulfides stabilise this stretch: cysteine 42-cysteine 98 and cysteine 182-cysteine 187. An interaction with host N-linked glycan region spans residues 68–84 (WQISGLANGWVIMGPGY). Positions 256–288 (YGLSEKVTTKNKFKWPLVGETELSIEIAANQSW) are part of the transmembrane beta-barrel after proteolytic activation of the toxin and insertion into the host membrane. Positions 346–355 (RWGGNAWYTH) are interaction with glycans from host GPI-anchor. Residues 446 to 493 (AADSKVRRARSVDGAGQGLRLEIPLDAQELSGLGFNNVSLSVTPAANQ) constitute a propeptide that is removed on maturation.

This sequence belongs to the aerolysin family. In terms of assembly, homodimer in solution; homoheptamer in the host membrane. After binding to GPI-anchored proteins in target membranes and proteolytic removal of the C-terminal propeptide, the protein assembles into a heptameric pre-pore complex. A further conformation change leads to insertion into the host membrane. Post-translationally, proteolytic cleavage and subsequent release of the propeptide trigger a major conformation change, leading to the formation of a heptameric pre-pore that then inserts into the host membrane.

The protein resides in the secreted. It is found in the host cell membrane. Functionally, secreted, cytolytic toxin that forms pores in host membranes after proteolytic removal of a C-terminal propeptide, leading to destruction of the membrane permeability barrier and host cell death. The pores are formed by transmembrane beta-strands and are approximately 3 nm in diameter. The sequence is that of Aerolysin (aerA) from Aeromonas hydrophila.